Consider the following 599-residue polypeptide: UvrABC system protein C (599 aa).

Positions 19–95 constitute a GIY-YIG domain; that stretch reads ESTGVYIFYD…IKKYRPIMNV (77 aa). One can recognise a UVR domain in the interval 206 to 241; sequence EEIIEKLYDQMQEYSKNLEFEKAAKIRDKIRLLQNL.

This sequence belongs to the UvrC family. In terms of assembly, interacts with UvrB in an incision complex.

It localises to the cytoplasm. Its function is as follows. The UvrABC repair system catalyzes the recognition and processing of DNA lesions. UvrC both incises the 5' and 3' sides of the lesion. The N-terminal half is responsible for the 3' incision and the C-terminal half is responsible for the 5' incision. This chain is UvrABC system protein C, found in Dictyoglomus thermophilum (strain ATCC 35947 / DSM 3960 / H-6-12).